We begin with the raw amino-acid sequence, 341 residues long: Dihydroorotate dehydrogenase (quinone) (341 aa).

FMN-binding positions include 61 to 65 and T85; that span reads AGLDK. Position 65 (K65) interacts with substrate. 110 to 114 serves as a coordination point for substrate; the sequence is NRMGF. Residues N138 and N171 each contribute to the FMN site. N171 contributes to the substrate binding site. Catalysis depends on S174, which acts as the Nucleophile. N176 serves as a coordination point for substrate. Residues K216 and T244 each coordinate FMN. Substrate is bound at residue 245–246; sequence NT. FMN-binding positions include G267, G296, and 317–318; that span reads YS.

It belongs to the dihydroorotate dehydrogenase family. Type 2 subfamily. Monomer. The cofactor is FMN.

It is found in the cell membrane. It catalyses the reaction (S)-dihydroorotate + a quinone = orotate + a quinol. Its pathway is pyrimidine metabolism; UMP biosynthesis via de novo pathway; orotate from (S)-dihydroorotate (quinone route): step 1/1. Its function is as follows. Catalyzes the conversion of dihydroorotate to orotate with quinone as electron acceptor. In Pseudomonas putida (strain GB-1), this protein is Dihydroorotate dehydrogenase (quinone).